A 112-amino-acid polypeptide reads, in one-letter code: Putative pterin-4-alpha-carbinolamine dehydratase (112 aa).

The protein belongs to the pterin-4-alpha-carbinolamine dehydratase family.

It carries out the reaction (4aS,6R)-4a-hydroxy-L-erythro-5,6,7,8-tetrahydrobiopterin = (6R)-L-erythro-6,7-dihydrobiopterin + H2O. The protein is Putative pterin-4-alpha-carbinolamine dehydratase of Vibrio parahaemolyticus serotype O3:K6 (strain RIMD 2210633).